We begin with the raw amino-acid sequence, 1122 residues long: MSDMVERTLTALPGLFLQNQLGGPAASRAPFFSRLGGLIRGVTALSSKHEEEKLIQQELSSLKATVSAPTTTLKTMKECMVRLIYCEMLGYDASFGYIHAIKLAQQGNLLEKRVGYLAVSLFLHESHELLLLLVNTVVKDLQSTNLVEVCMALTVVSQIFPREMIPAVLPLIEDKLQHSKEIIRRKAVLALYKFYLIAPNQVQHIHTKFRKALCDRDVGVMAASLHIYLRMIKENASGYKDLTESFVTILKQVVGGKLPVEFSYHSVPAPWLQIQLLRILGLLGKDDERTSELMYDVLDESLRRAELNHNVTYAILFECVHTIYSIYPKSELLEKAAKCIGKFVLSPKINLKYLGLKALTYVIQQDPSLALQHQITIIECLDHPDPIIKRETLELLYRITNAQNVVVIVQKMLEYLHQSKEEHIIISLVGRIAELAEKYAPDNVWFIQTMNAVFSVGGDVMHPDILSNFLRLLAEGFDDETEDQQLRLYAVQSYLTLLDMENTFYPQRFLQVMSWVLGEYSYLLDKESPEEVITRLYKLLMSDSISSETKAWLFAAVTKLTPQAHSSPLVEKLIQEFTVSLNTCLRQHAFELKHLHENTELMKSLLQGAQNCEDIVADASLSFLDGFVAEGLSQGAAPYKPHHQRQEEQLSQEKVLNFEPYGLSFSSSGFTGRQSPAGISLGSDISGNSAETGLKETSSLKMEGIKKLWGKEGYLPKKESGTGDKPEASHVPAEGATVENVDQATTRKDQAQGHIPSTEEKEKQLLASSLFVGLGPENTVDLLGKADVVSHKFRRKSKLKVAQSDKTPSAPTAPCSALSLGSDVAGGDEDGLSAVDRGDGELSSELFRSESLSGPPSAEKLESVSLPVPSLFADNNMEVFNPPSSSATSTVKEETPECRHSGLVEICSNEAVSVSSYKVWRDDCLLVIWAVTSKTDSEFTDAQLEIFPVENFKIIEQPECSSPVIETERTKSFQYSVQMESPCIEGTLSGFIKYQMMDTHSVQLEFSMNLPLLDFIRPLKISTEDFGKLWLSFANDVKQTIKISEPGVALTSVLTELQQNLRLRVIDVIGNEGLLACKLLPSTPCVLHCRVHADAVALWFRSSSSVLSDYLSCHCQKVMQTS.

A Phosphoserine modification is found at Ser-699. Composition is skewed to basic and acidic residues over residues 714-728 and 745-760; these read YLPK…KPEA and TTRK…STEE. Disordered stretches follow at residues 714-760 and 797-861; these read YLPK…STEE and SKLK…AEKL. An interaction with TEPSIN region spans residues 726–1122; that stretch reads PEASHVPAEG…CHCQKVMQTS (397 aa). Residues 841-853 show a composition bias toward low complexity; that stretch reads ELSSELFRSESLS. At Ser-851 the chain carries Phosphoserine.

Belongs to the adaptor complexes large subunit family. Adaptor protein complex 4 (AP-4) is a heterotetramer composed of two large adaptins (epsilon-type subunit AP4E1 and beta-type subunit AP4B1), a medium adaptin (mu-type subunit AP4M1) and a small adaptin (sigma-type AP4S1). Interacts with TEPSIN. Interacts with GRIA2; probably indirect it mediates the somatodendritic localization of GRIA2 in neurons.

The protein resides in the golgi apparatus. It is found in the trans-Golgi network membrane. Functionally, component of the adaptor protein complex 4 (AP-4). Adaptor protein complexes are vesicle coat components involved both in vesicle formation and cargo selection. They control the vesicular transport of proteins in different trafficking pathways. AP-4 forms a non clathrin-associated coat on vesicles departing the trans-Golgi network (TGN) and may be involved in the targeting of proteins from the trans-Golgi network (TGN) to the endosomal-lysosomal system. It is also involved in protein sorting to the basolateral membrane in epithelial cells and the proper asymmetric localization of somatodendritic proteins in neurons. AP-4 is involved in the recognition and binding of tyrosine-based sorting signals found in the cytoplasmic part of cargos, but may also recognize other types of sorting signal. This is AP-4 complex subunit epsilon-1 from Mus musculus (Mouse).